A 369-amino-acid polypeptide reads, in one-letter code: GTPase Obg (369 aa).

The region spanning 1–159 (MKFIDEARIE…RMLKLELKVL (159 aa)) is the Obg domain. Residues 128–147 (LHFKSSTNRAPRQKTDGKPG) form a disordered region. Residues 160-334 (ADVGLLGMPN…LCYAIYDYLA (175 aa)) enclose the OBG-type G domain. Residues 166–173 (GMPNAGKS), 191–195 (FTTLA), 213–216 (DIPG), 284–287 (NKLD), and 315–317 (SAL) each bind GTP. Residues serine 173 and threonine 193 each coordinate Mg(2+).

It belongs to the TRAFAC class OBG-HflX-like GTPase superfamily. OBG GTPase family. Monomer. It depends on Mg(2+) as a cofactor.

It is found in the cytoplasm. Functionally, an essential GTPase which binds GTP, GDP and possibly (p)ppGpp with moderate affinity, with high nucleotide exchange rates and a fairly low GTP hydrolysis rate. Plays a role in control of the cell cycle, stress response, ribosome biogenesis and in those bacteria that undergo differentiation, in morphogenesis control. The polypeptide is GTPase Obg (Burkholderia multivorans (strain ATCC 17616 / 249)).